We begin with the raw amino-acid sequence, 782 residues long: Chaoptin (782 aa).

LRR repeat units follow at residues 16–37 (SLLT…PSDA), 43–64 (RLEE…SFHF), 67–88 (SLKK…TFQG), 93–114 (DLTE…TFAD), 117–138 (QLEQ…AFMN), 141–162 (SLKR…TFQN), 165–186 (ELED…IFDQ), 191–212 (GMFH…PSVP), 224–245 (NIKV…FFRP), 249–270 (SLMQ…LFGN), 273–294 (HLQV…TFRN), 297–318 (KLQW…LFRF), 321–342 (NLRI…LFRE), 344–364 (GLER…TSLS), 370–391 (TLSE…GQLA), 395–416 (CLSW…TFKG), 419–442 (RLAS…SFQG), 446–467 (TLLH…STPN), 468–488 (LLSL…VAGN), 491–512 (SLRY…THSL), 514–535 (ELRH…SLLG), and 539–560 (QLEE…AFCK). 3 N-linked (GlcNAc...) asparagine glycosylation sites follow: Asn196, Asn234, and Asn262. N-linked (GlcNAc...) asparagine glycosylation is found at Asn454 and Asn488. Residue Asn530 is glycosylated (N-linked (GlcNAc...) asparagine). Residues Asn618, Asn648, and Asn667 are each glycosylated (N-linked (GlcNAc...) asparagine).

It belongs to the chaoptin family.

The protein localises to the cell membrane. Its function is as follows. Required for photoreceptor cell morphogenesis. Mediates homophilic cellular adhesion. This chain is Chaoptin (CHP), found in Tribolium castaneum (Red flour beetle).